The sequence spans 550 residues: Hydroxylamine reductase (550 aa).

Residues cysteine 3, cysteine 6, cysteine 18, and cysteine 25 each coordinate [2Fe-2S] cluster. Hybrid [4Fe-2O-2S] cluster-binding residues include histidine 249, glutamate 273, cysteine 317, cysteine 405, cysteine 433, cysteine 458, glutamate 492, and lysine 494. Position 405 is a cysteine persulfide (cysteine 405).

The protein belongs to the HCP family. The cofactor is [2Fe-2S] cluster. Requires hybrid [4Fe-2O-2S] cluster as cofactor.

It localises to the cytoplasm. The catalysed reaction is A + NH4(+) + H2O = hydroxylamine + AH2 + H(+). In terms of biological role, catalyzes the reduction of hydroxylamine to form NH(3) and H(2)O. The polypeptide is Hydroxylamine reductase (Pectobacterium atrosepticum (strain SCRI 1043 / ATCC BAA-672) (Erwinia carotovora subsp. atroseptica)).